Consider the following 846-residue polypeptide: Disrupted in schizophrenia 1 homolog (846 aa).

Disordered regions lie at residues 1–53 (MQGA…IGFL), 127–147 (HSGVHSGNDRRQSERLTGDSG), 231–257 (EAEPLHQSPQEMAAEGSGSDRPHGEPR), 277–312 (TRSNRQPECGMVSSSDAGFSSQDASPAGGRSDQDGG), and 409–436 (LHGAPQRAGSDDPEAPLEGQRRTTAQDS). The interaction with MAP1A stretch occupies residues 1–288 (MQGAGSRGAW…SNRQPECGMV (288 aa)). Basic and acidic residues-rich tracts occupy residues 133–143 (GNDRRQSERLT) and 248–257 (GSDRPHGEPR). Over residues 277-300 (TRSNRQPECGMVSSSDAGFSSQDA) the composition is skewed to polar residues. The interaction with TRAF3IP1 stretch occupies residues 289 to 686 (SSSDAGFSSQ…LERVWKADLE (398 aa)). The required for localization to punctate cytoplasmic foci stretch occupies residues 429–587 (RRTTAQDSLP…LLEAKMLALS (159 aa)). The interval 435–846 (DSLPGLAVTR…STAGAQEAED (412 aa)) is necessary and sufficient for interaction with PCNT and localization at the centrosome. Positions 440–489 (LAVTRRDWLMREKEQLQKEIEALRARVSVLEAKEQRLSQELEDQEMLLRW) form a coiled coil. Positions 588–846 (GSCFSTAKEL…STAGAQEAED (259 aa)) are interaction with ATF4 and ATF5. The segment at 721 to 846 (TAALAVPRTP…STAGAQEAED (126 aa)) is interaction with NDEL1 and PAFAH1B1. The tract at residues 721–846 (TAALAVPRTP…STAGAQEAED (126 aa)) is interaction with PAFAH1B1. Residues 795–828 (GHDEALFQSLQGELQMVKETLQTMFLQLQPAKEA) are interaction with NDEL1.

Interacts with NDEL1. Interacts with CCDC88A (via C-terminus); the interaction is direct. Interacts with GSK3B. Interacts with tubulin alpha, ACTN2, ANKHD1, ATF4, ATF5, CEP63, EIF3S3, MAP1A, NDEL1, PAFAH1B1, RANBP9, SPTBN4, SYNE1 and TRAF3IP1. Interaction with microtubules may be mediated in part by TRAF3IP1. Interacts (via C-terminal) with PCNT. Interacts with CHCHD6. Interacts with CCDC141. Interacts with FBXW7, the substrate-recognition component of a SCF (SKP1-CUL1-F-box protein) E3 ubiquitin-protein ligase complex; the interaction targets DISC1 for proteasomal degradation. Interacts with ZNF365. Interacts with ATF4; inhibiting ATF4 transcription factor activity by disrupting ATF4 dimerization and DNA-binding. Interacts with PDE4B. In terms of processing, ubiquitinated. Ubiquitination with 'Lys-48'-linked polyubiquitin chains leads to its proteasomal degradation. In terms of tissue distribution, expressed in brain, heart, kidney, liver and thymus. Within the brain expression is high in the cerebral cortex, hippocampus and olfactory bulb and is also seen at lower levels in the cerebellum (at protein level).

It is found in the cytoplasm. The protein localises to the cytoskeleton. It localises to the mitochondrion. The protein resides in the microtubule organizing center. Its subcellular location is the centrosome. It is found in the postsynaptic density. Involved in the regulation of multiple aspects of embryonic and adult neurogenesis. Required for neural progenitor proliferation in the ventrical/subventrical zone during embryonic brain development and in the adult dentate gyrus of the hippocampus. Participates in the Wnt-mediated neural progenitor proliferation as a positive regulator by modulating GSK3B activity and CTNNB1 abundance. Plays a role as a modulator of the AKT-mTOR signaling pathway controlling the tempo of the process of newborn neurons integration during adult neurogenesis, including neuron positioning, dendritic development and synapse formation. Inhibits the activation of AKT-mTOR signaling upon interaction with CCDC88A. Regulates the migration of early-born granule cell precursors toward the dentate gyrus during the hippocampal development. Inhibits ATF4 transcription factor activity in neurons by disrupting ATF4 dimerization and DNA-binding. Plays a role, together with PCNT, in the microtubule network formation. The polypeptide is Disrupted in schizophrenia 1 homolog (Rattus norvegicus (Rat)).